The following is a 157-amino-acid chain: 2-C-methyl-D-erythritol 2,4-cyclodiphosphate synthase (157 aa).

Residues aspartate 9 and histidine 11 each coordinate a divalent metal cation. Residues 9–11 and 35–36 each bind 4-CDP-2-C-methyl-D-erythritol 2-phosphate; these read DVH and HS. Histidine 43 is a binding site for a divalent metal cation. Residues 57–59, 62–66, 101–107, 133–136, phenylalanine 140, and arginine 143 each bind 4-CDP-2-C-methyl-D-erythritol 2-phosphate; these read DIG, FPDTD, AEKPKMA, and TTTE.

Belongs to the IspF family. As to quaternary structure, homotrimer. The cofactor is a divalent metal cation.

It catalyses the reaction 4-CDP-2-C-methyl-D-erythritol 2-phosphate = 2-C-methyl-D-erythritol 2,4-cyclic diphosphate + CMP. It participates in isoprenoid biosynthesis; isopentenyl diphosphate biosynthesis via DXP pathway; isopentenyl diphosphate from 1-deoxy-D-xylulose 5-phosphate: step 4/6. Functionally, involved in the biosynthesis of isopentenyl diphosphate (IPP) and dimethylallyl diphosphate (DMAPP), two major building blocks of isoprenoid compounds. Catalyzes the conversion of 4-diphosphocytidyl-2-C-methyl-D-erythritol 2-phosphate (CDP-ME2P) to 2-C-methyl-D-erythritol 2,4-cyclodiphosphate (ME-CPP) with a corresponding release of cytidine 5-monophosphate (CMP). The sequence is that of 2-C-methyl-D-erythritol 2,4-cyclodiphosphate synthase from Listeria monocytogenes serotype 4b (strain F2365).